A 242-amino-acid polypeptide reads, in one-letter code: 7-cyano-7-deazaguanine synthase (242 aa).

Residue 12–22 coordinates ATP; that stretch reads FSGGQDSATCL. Cysteine 200, cysteine 215, cysteine 218, and cysteine 221 together coordinate Zn(2+).

The protein belongs to the QueC family. Zn(2+) serves as cofactor.

It catalyses the reaction 7-carboxy-7-deazaguanine + NH4(+) + ATP = 7-cyano-7-deazaguanine + ADP + phosphate + H2O + H(+). It functions in the pathway purine metabolism; 7-cyano-7-deazaguanine biosynthesis. In terms of biological role, catalyzes the ATP-dependent conversion of 7-carboxy-7-deazaguanine (CDG) to 7-cyano-7-deazaguanine (preQ(0)). This chain is 7-cyano-7-deazaguanine synthase, found in Gluconobacter oxydans (strain 621H) (Gluconobacter suboxydans).